Reading from the N-terminus, the 305-residue chain is Myb-like transcriptional regulator basR (305 aa).

3 Myb-like domains span residues 5–59 (RRRW…YNRF), 60–110 (TGGL…HHCL), and 111–162 (NPEL…TILS). Residues 175 to 215 (PCCDSPSPSKSSRRPPSTPTSTPQVPGSRQGSSYDPYDYGS) form a disordered region. The segment covering 198-207 (QVPGSRQGSS) has biased composition (polar residues).

It is found in the nucleus. Functionally, transcription regulator that acts as a central regulatory node for the integration of external bacterial signals leading to the regulation of secondary metabolite gene clusters such as orsellinic, lecanoric acid, cichorine, 2,4-dihydroxy-3-methyl-6-(2-oxopropyl)benzaldehyde (dba), emericellamide or microperfuranone clusters. The sequence is that of Myb-like transcriptional regulator basR from Emericella nidulans (strain FGSC A4 / ATCC 38163 / CBS 112.46 / NRRL 194 / M139) (Aspergillus nidulans).